The chain runs to 138 residues: uncharacterized protein (138 aa).

This is an uncharacterized protein from Caenorhabditis elegans.